The following is a 202-amino-acid chain: MSRYRGPRVKIIRRLGVLPGLTNKIPQLKSSSINQSTSNKKISQYRIRLEEKQKLRFHYGITERQLLNYVRIARKAKGSTGEVLLQLLEMRLDNIIFRLGMAPTIPGARQLVNHRHIGVNDCIVNIPSYRCKPQDFITIKNQQKSEAIISKNIEFYQKFKRPNHLTYSSLEKKGLVNRILDRESTGLKINELLVVEYYSRQA.

The 64-residue stretch at 90 to 153 (MRLDNIIFRL…KSEAIISKNI (64 aa)) folds into the S4 RNA-binding domain.

Belongs to the universal ribosomal protein uS4 family. Part of the 30S ribosomal subunit. Contacts protein S5. The interaction surface between S4 and S5 is involved in control of translational fidelity.

Its subcellular location is the plastid. The protein resides in the chloroplast. One of the primary rRNA binding proteins, it binds directly to 16S rRNA where it nucleates assembly of the body of the 30S subunit. Functionally, with S5 and S12 plays an important role in translational accuracy. The protein is Small ribosomal subunit protein uS4c (rps4) of Hookeria lucens (Moss).